We begin with the raw amino-acid sequence, 233 residues long: MNKPIIALDFQTYEEVETFLANFSGESLSVKVGMELFYSNGPIIVEKIKQQNHAIFLDLKLHDIPNTVKSAMISLAKLGVDMVNVHAAGGKKMMEFAREGLEIGAGSGKRPKLIAVTQLTSTSEAAMQTEQIVKASLLESVLHYSDLTKQAGLDGVVCSALEAEEIRLQNGEDFLRVTPGIRLLSDAANDQIRVVTPEKARVIGSTNIVVGRSITRANDPVKAYNQVLKEWNV.

Residues D9, K31, 58-67, T120, R182, Q191, G211, and R212 contribute to the substrate site; that span reads DLKLHDIPNT. K60 functions as the Proton donor in the catalytic mechanism.

The protein belongs to the OMP decarboxylase family. Type 1 subfamily. In terms of assembly, homodimer.

It carries out the reaction orotidine 5'-phosphate + H(+) = UMP + CO2. Its pathway is pyrimidine metabolism; UMP biosynthesis via de novo pathway; UMP from orotate: step 2/2. In terms of biological role, catalyzes the decarboxylation of orotidine 5'-monophosphate (OMP) to uridine 5'-monophosphate (UMP). The polypeptide is Orotidine 5'-phosphate decarboxylase (Listeria welshimeri serovar 6b (strain ATCC 35897 / DSM 20650 / CCUG 15529 / CIP 8149 / NCTC 11857 / SLCC 5334 / V8)).